The following is a 256-amino-acid chain: Gramicidin S biosynthesis protein GrsT (256 aa).

Residue Ser-95 is part of the active site.

It belongs to the thioesterase family.

It participates in antibiotic biosynthesis; gramicidin S biosynthesis. In terms of biological role, probable thioesterase involved in the biosynthesis of gramicidin S. The sequence is that of Gramicidin S biosynthesis protein GrsT (grsT) from Aneurinibacillus migulanus (Bacillus migulanus).